Consider the following 260-residue polypeptide: MVLIKVLANLLVLQLSYAQKSSELVVGGDECNINEHPFLVALYTSASSTIHCAGALINREWVLTAAHCDRRNIRIKLGMHSKNIRNEDEQIRVPRGKYFCLNTKFPNGLDKDIMLIRLRRPVTYSTHIAPVSLPSRSRGVGSRCRIMGWGKISTTEDTYPDVPHCTNIFIVKHKWCEPLYPWVPADSRTLCAGILKGGRDTCHGDSGGPLICNGEMHGIVAGGSEPCGQHLKPAVYTKVFDYNNWIQSIIAGNRTVTCPP.

The first 18 residues, 1–18 (MVLIKVLANLLVLQLSYA), serve as a signal peptide directing secretion. Residues 19-24 (QKSSEL) constitute a propeptide that is removed on maturation. The Peptidase S1 domain maps to 25–251 (VVGGDECNIN…YNNWIQSIIA (227 aa)). Disulfide bonds link Cys31–Cys165, Cys52–Cys68, Cys100–Cys258, Cys144–Cys212, Cys176–Cys191, and Cys202–Cys227. Catalysis depends on charge relay system residues His67 and Asp112. The active-site Charge relay system is Ser206. Asn253 carries N-linked (GlcNAc...) asparagine glycosylation.

It belongs to the peptidase S1 family. Snake venom subfamily. As to quaternary structure, monomer. As to expression, expressed by the venom gland.

Its subcellular location is the secreted. The catalysed reaction is Fully activates human clotting factor V by a single cleavage at the 1545-Trp-Tyr-Leu-Arg-|-Ser-Asn-Asn-Gly-1552 bond. Cattle, but not rabbit, factor V is cleaved, and no other proteins of the clotting system are attacked. Esterase activity is observed on Bz-Arg-OEt and Tos-Arg-OMe, and amidase activity on Phe-pipecolyl-Arg-NHPhNO2.. Functionally, venom serine protease that selectively activates factor V (F5) in a calcium-independent manner. It cleaves the Arg(1545)-Ser(1546) linkage in the human factor V molecule. Induces the coagulation of mammalian plasma. The sequence is that of Factor V activator RVV-V gamma from Daboia siamensis (Eastern Russel's viper).